The primary structure comprises 221 residues: Octanoyltransferase (221 aa).

A BPL/LPL catalytic domain is found at 31–213 (DKSADEIWLV…HFVTILGYNK (183 aa)). Residues 70 to 77 (RGGQITYH), 142 to 144 (SLG), and 155 to 157 (GLA) each bind substrate. The active-site Acyl-thioester intermediate is the C173.

Belongs to the LipB family.

The protein localises to the cytoplasm. The catalysed reaction is octanoyl-[ACP] + L-lysyl-[protein] = N(6)-octanoyl-L-lysyl-[protein] + holo-[ACP] + H(+). The protein operates within protein modification; protein lipoylation via endogenous pathway; protein N(6)-(lipoyl)lysine from octanoyl-[acyl-carrier-protein]: step 1/2. Its function is as follows. Catalyzes the transfer of endogenously produced octanoic acid from octanoyl-acyl-carrier-protein onto the lipoyl domains of lipoate-dependent enzymes. Lipoyl-ACP can also act as a substrate although octanoyl-ACP is likely to be the physiological substrate. The protein is Octanoyltransferase of Mannheimia succiniciproducens (strain KCTC 0769BP / MBEL55E).